We begin with the raw amino-acid sequence, 294 residues long: Urease accessory protein UreD 1 (294 aa).

The segment at 1–20 (MALSLDDLPEKPAPAEPVSA) is disordered.

It belongs to the UreD family. UreD, UreF and UreG form a complex that acts as a GTP-hydrolysis-dependent molecular chaperone, activating the urease apoprotein by helping to assemble the nickel containing metallocenter of UreC. The UreE protein probably delivers the nickel.

It is found in the cytoplasm. Its function is as follows. Required for maturation of urease via the functional incorporation of the urease nickel metallocenter. This chain is Urease accessory protein UreD 1, found in Methylorubrum populi (strain ATCC BAA-705 / NCIMB 13946 / BJ001) (Methylobacterium populi).